The sequence spans 433 residues: 26S proteasome regulatory subunit 7 (433 aa).

The interval 1–22 (MPDYLGADQRKTKEDEKDDKPI) is disordered. Positions 8-22 (DQRKTKEDEKDDKPI) are enriched in basic and acidic residues. An N6-acetyllysine modification is found at lysine 116. 216-223 (GPPGTGKT) serves as a coordination point for ATP. Lysine 422 carries the post-translational modification N6-acetyllysine.

It belongs to the AAA ATPase family. As to quaternary structure, component of the 19S proteasome regulatory particle complex. The 26S proteasome consists of a 20S core particle (CP) and two 19S regulatory subunits (RP). The regulatory particle is made of a lid composed of 9 subunits, a base containing 6 ATPases including PSMC2 and few additional components. Interacts with NDC80/HEC; this interaction is detected only during M phase. Interacts and SQSTM1. Interacts with PAAF1. Directly interacts with TRIM5. In terms of processing, monoubiquitinated by RNF181. Post-translationally, phosphorylated. Dephosphorylated by UBLCP1 which impairs PSMC2 ATPase activity and disrupts 26S proteasome assembly.

The protein resides in the cytoplasm. It is found in the nucleus. In terms of biological role, component of the 26S proteasome, a multiprotein complex involved in the ATP-dependent degradation of ubiquitinated proteins. This complex plays a key role in the maintenance of protein homeostasis by removing misfolded or damaged proteins, which could impair cellular functions, and by removing proteins whose functions are no longer required. Therefore, the proteasome participates in numerous cellular processes, including cell cycle progression, apoptosis, or DNA damage repair. PSMC2 belongs to the heterohexameric ring of AAA (ATPases associated with diverse cellular activities) proteins that unfolds ubiquitinated target proteins that are concurrently translocated into a proteolytic chamber and degraded into peptides. This chain is 26S proteasome regulatory subunit 7 (PSMC2), found in Pongo abelii (Sumatran orangutan).